Here is a 93-residue protein sequence, read N- to C-terminus: Small ribosomal subunit protein bS16 (93 aa).

Belongs to the bacterial ribosomal protein bS16 family.

In Dictyoglomus turgidum (strain DSM 6724 / Z-1310), this protein is Small ribosomal subunit protein bS16.